The primary structure comprises 1905 residues: Microtubule cross-linking factor 1 (1905 aa).

Positions 1-249 (METLNGPAGG…SSDREPPRGA (249 aa)) are necessary for colocalization and binding with microtubules. A disordered region spans residues 1–329 (METLNGPAGG…SLGEQSRLVP (329 aa)). The tract at residues 1–508 (METLNGPAGG…QDDSADLRCQ (508 aa)) is necessary for self-assembly, microtubule bundling activity and apicobasal microtubule organization. The span at 22 to 40 (QHHRHHHLHPVAERRRLHR) shows a compositional bias: basic residues. Composition is skewed to low complexity over residues 63-95 (VPSS…AAPG) and 115-130 (AGAR…LGSR). A phosphoserine mark is found at Ser-77 and Ser-87. Residues Ser-217, Ser-221, and Ser-263 each carry the phosphoserine modification. Positions 268 to 283 (ALLAAPLAAGACPGGR) are enriched in low complexity. Coiled-coil stretches lie at residues 330–404 (AAEE…EQKS), 432–483 (SVRL…SSLK), and 513–718 (KEEA…LQHE). 5 disordered regions span residues 544–563 (YGDV…PSTR), 601–631 (DMRG…LESS), 671–694 (FEPP…GAPL), 737–800 (LRAP…SEPC), and 842–867 (AGLR…GDQQ). Ser-549 is modified (phosphoserine). The segment covering 601 to 616 (DMRGQQEREGPGRDHA) has biased composition (basic and acidic residues). A Phosphoserine modification is found at Ser-618. Thr-621 is modified (phosphothreonine). A compositionally biased stretch (gly residues) spans 680 to 692 (LGEGASPGAGGGA). Position 685 is a phosphoserine (Ser-685). Residues 741 to 770 (SPRDSDAESDAGKKESDGEESRLPQPKREG) are compositionally biased toward basic and acidic residues. Residue Ser-776 is modified to Phosphoserine. Residues 857-866 (GEEEQGEGDQ) are compositionally biased toward acidic residues. 4 positions are modified to phosphoserine: Ser-901, Ser-923, Lys-941, and Thr-975. A disordered region spans residues 1080–1100 (GVQGGHQADGPDHDSDRGCGF). Coiled-coil stretches lie at residues 1143–1201 (KALL…ELGS) and 1238–1278 (EKNW…KENS). A necessary for interaction with MARK2 and apicobasal microtubule bundle formation in polarized epithelial cells region spans residues 1265 to 1382 (EFLWRIEQLQ…EENHKGNLQR (118 aa)). At Ser-1278 the chain carries Phosphoserine. The disordered stretch occupies residues 1346-1384 (ALSLDDEPEEPPAHRPEREFRNRLPEEEENHKGNLQRAV). Residues 1356–1377 (PPAHRPEREFRNRLPEEEENHK) are compositionally biased toward basic and acidic residues. Phosphoserine occurs at positions 1385, 1388, and 1399. Thr-1417 is modified (phosphothreonine). Ser-1421 carries the post-translational modification Phosphoserine. Tyr-1427 carries the phosphotyrosine modification. The disordered stretch occupies residues 1485–1505 (DTMTSPEHCQKQPLRSHVLTE). Residues Ser-1514, Ser-1523, Ser-1561, Ser-1578, Ser-1583, Ser-1592, and Ser-1661 each carry the phosphoserine modification. Residues 1524-1569 (ITAAGGEGPFPTSRARGSPGDTKGGPPEPMLSRWPCTSPRHSRDYV) are disordered. 4 disordered regions span residues 1655-1689 (GSGV…SRQV), 1707-1756 (PKYG…PVHT), 1782-1842 (GLRA…APPG), and 1863-1905 (KEER…PWGL). Phosphothreonine is present on residues Thr-1667 and Thr-1675. A compositionally biased stretch (low complexity) spans 1678–1687 (SSPSRSLRSR). The necessary for colocalization and binding with microtubules stretch occupies residues 1678-1773 (SSPSRSLRSR…SLFNIIDHSP (96 aa)). Phosphoserine is present on residues Ser-1679 and Ser-1683. A compositionally biased stretch (polar residues) spans 1744-1756 (ARSTTTRESPVHT). A phosphoserine mark is found at Ser-1791, Ser-1808, Ser-1812, and Ser-1814.

Belongs to the SOGA family. In terms of assembly, homodimer. Associates (via N- and C-terminus domains) with microtubule filaments. Interacts with MARK2; the interaction is direct. In terms of processing, phosphorylated during mitosis in a CDK1-dependent manner.

The protein localises to the lateral cell membrane. It is found in the apical cell membrane. It localises to the cytoplasm. The protein resides in the cytoskeleton. Its subcellular location is the spindle pole. The protein localises to the midbody. Microtubule-associated factor involved in the late phase of epithelial polarization and microtubule dynamics regulation. Plays a role in the development and maintenance of non-centrosomal microtubule bundles at the lateral membrane in polarized epithelial cells. Required for faithful chromosome segregation during mitosis. In Homo sapiens (Human), this protein is Microtubule cross-linking factor 1 (MTCL1).